The sequence spans 383 residues: uncharacterized protein (383 aa).

Belongs to the peptidase M20 family.

This is an uncharacterized protein from Staphylococcus aureus (strain USA300).